The chain runs to 337 residues: tRNA pseudouridine synthase D (337 aa).

Residue aspartate 77 is the Nucleophile of the active site. A TRUD domain is found at 152-308; the sequence is GFPNYFTEQR…ARDFHWEFVE (157 aa).

The protein belongs to the pseudouridine synthase TruD family.

It carries out the reaction uridine(13) in tRNA = pseudouridine(13) in tRNA. In terms of biological role, responsible for synthesis of pseudouridine from uracil-13 in transfer RNAs. The protein is tRNA pseudouridine synthase D of Mannheimia succiniciproducens (strain KCTC 0769BP / MBEL55E).